Reading from the N-terminus, the 827-residue chain is Periplasmic nitrate reductase (827 aa).

Positions 1–32 (MELSRRDFMKANAAVAAAAAAGIVLPVKNVQA) form a signal peptide, tat-type signal. A 4Fe-4S Mo/W bis-MGD-type domain is found at 37–93 (IKWDKAPCRFCGTGCSVLVGTKDGRVVATQGDPDAEVNRGLNCIKGYFLSKIMYGAD). [4Fe-4S] cluster contacts are provided by Cys44, Cys47, Cys51, and Cys79. Residues Lys81, Gln148, Asn173, Cys177, 210 to 217 (WGSNMAEM), 241 to 245 (STFEH), Met371, Gln375, Asn481, 507 to 508 (SD), Lys530, Asp557, and 717 to 726 (TGRVLEHWHT) contribute to the Mo-bis(molybdopterin guanine dinucleotide) site. Phe793 contacts substrate. Mo-bis(molybdopterin guanine dinucleotide) contacts are provided by Asn801 and Lys818.

It belongs to the prokaryotic molybdopterin-containing oxidoreductase family. NasA/NapA/NarB subfamily. Component of the periplasmic nitrate reductase NapAB complex composed of NapA and NapB. Requires [4Fe-4S] cluster as cofactor. The cofactor is Mo-bis(molybdopterin guanine dinucleotide). Predicted to be exported by the Tat system. The position of the signal peptide cleavage has not been experimentally proven.

It localises to the periplasm. The enzyme catalyses 2 Fe(II)-[cytochrome] + nitrate + 2 H(+) = 2 Fe(III)-[cytochrome] + nitrite + H2O. Functionally, catalytic subunit of the periplasmic nitrate reductase complex NapAB. Receives electrons from NapB and catalyzes the reduction of nitrate to nitrite. The chain is Periplasmic nitrate reductase from Haemophilus ducreyi (strain 35000HP / ATCC 700724).